Here is a 142-residue protein sequence, read N- to C-terminus: 3-hydroxyacyl-[acyl-carrier-protein] dehydratase FabZ (142 aa).

The active site involves histidine 50.

Belongs to the thioester dehydratase family. FabZ subfamily.

It is found in the cytoplasm. It catalyses the reaction a (3R)-hydroxyacyl-[ACP] = a (2E)-enoyl-[ACP] + H2O. Involved in unsaturated fatty acids biosynthesis. Catalyzes the dehydration of short chain beta-hydroxyacyl-ACPs and long chain saturated and unsaturated beta-hydroxyacyl-ACPs. The polypeptide is 3-hydroxyacyl-[acyl-carrier-protein] dehydratase FabZ (Clostridium botulinum (strain Alaska E43 / Type E3)).